We begin with the raw amino-acid sequence, 270 residues long: Beta carbonic anhydrase 1 (270 aa).

The Zn(2+) site is built by C39, D41, H105, and C108.

It belongs to the beta-class carbonic anhydrase family. In terms of assembly, oligomer. Zn(2+) is required as a cofactor.

It carries out the reaction hydrogencarbonate + H(+) = CO2 + H2O. Its function is as follows. Reversible hydration of carbon dioxide. The chain is Beta carbonic anhydrase 1 (bca-1) from Caenorhabditis elegans.